The sequence spans 361 residues: Anthranilate phosphoribosyltransferase (361 aa).

Residues glycine 80, 83–84, threonine 88, 90–93, 108–116, and serine 120 contribute to the 5-phospho-alpha-D-ribose 1-diphosphate site; these read GD, NVST, and KHGNYSVSS. Glycine 80 provides a ligand contact to anthranilate. Serine 92 contacts Mg(2+). Asparagine 111 is an anthranilate binding site. Arginine 166 is a binding site for anthranilate. Mg(2+) is bound by residues aspartate 224 and glutamate 225. The segment at 338-361 is disordered; the sequence is EGDGEAASTDSAAASTTAGPEDDD. Positions 343 to 355 are enriched in low complexity; the sequence is AASTDSAAASTTA.

Belongs to the anthranilate phosphoribosyltransferase family. As to quaternary structure, homodimer. Mg(2+) is required as a cofactor.

The catalysed reaction is N-(5-phospho-beta-D-ribosyl)anthranilate + diphosphate = 5-phospho-alpha-D-ribose 1-diphosphate + anthranilate. Its pathway is amino-acid biosynthesis; L-tryptophan biosynthesis; L-tryptophan from chorismate: step 2/5. In terms of biological role, catalyzes the transfer of the phosphoribosyl group of 5-phosphorylribose-1-pyrophosphate (PRPP) to anthranilate to yield N-(5'-phosphoribosyl)-anthranilate (PRA). The polypeptide is Anthranilate phosphoribosyltransferase (Halorubrum lacusprofundi (strain ATCC 49239 / DSM 5036 / JCM 8891 / ACAM 34)).